We begin with the raw amino-acid sequence, 418 residues long: Glutamyl-tRNA reductase (418 aa).

Residues 49 to 52, Ser107, 112 to 114, and Gln118 contribute to the substrate site; these read TCNR and EPQ. The active-site Nucleophile is the Cys50. Residue 187–192 coordinates NADP(+); sequence GAGETI.

Belongs to the glutamyl-tRNA reductase family. As to quaternary structure, homodimer.

It carries out the reaction (S)-4-amino-5-oxopentanoate + tRNA(Glu) + NADP(+) = L-glutamyl-tRNA(Glu) + NADPH + H(+). Its pathway is porphyrin-containing compound metabolism; protoporphyrin-IX biosynthesis; 5-aminolevulinate from L-glutamyl-tRNA(Glu): step 1/2. In terms of biological role, catalyzes the NADPH-dependent reduction of glutamyl-tRNA(Glu) to glutamate 1-semialdehyde (GSA). This is Glutamyl-tRNA reductase from Pseudoalteromonas translucida (strain TAC 125).